The sequence spans 337 residues: Heme A synthase (337 aa).

The next 5 membrane-spanning stretches (helical) occupy residues 6-26 (ITKWLCINCIMVIATIVIGGI), 87-107 (FIHRLLGRITALIYIVPVIYF), 119-139 (LPYIIALLLFCVQGFIGWYMV), 154-174 (LAFHLIIAVIIYHILFYQLIK), and 192-212 (LIFSGIAITVVYVQIFLGALV). Position 256 (histidine 256) interacts with heme. 3 helical membrane-spanning segments follow: residues 258–278 (LVGYSVFLVVVVLIICLLKIE), 285–305 (IAYFLMIALFMQVSTGIITLL), and 308–328 (VPIIIASIHQLFAIILLSVII). Histidine 316 lines the heme pocket.

This sequence belongs to the COX15/CtaA family. Type 2 subfamily. As to quaternary structure, interacts with CtaB. The cofactor is heme b.

The protein resides in the cell membrane. It carries out the reaction Fe(II)-heme o + 2 A + H2O = Fe(II)-heme a + 2 AH2. It participates in porphyrin-containing compound metabolism; heme A biosynthesis; heme A from heme O: step 1/1. Catalyzes the conversion of heme O to heme A by two successive hydroxylations of the methyl group at C8. The first hydroxylation forms heme I, the second hydroxylation results in an unstable dihydroxymethyl group, which spontaneously dehydrates, resulting in the formyl group of heme A. This Rickettsia rickettsii (strain Iowa) protein is Heme A synthase.